The primary structure comprises 153 residues: Myoglobin (153 aa).

The Globin domain occupies 2–147; that stretch reads GLNDQEWQQV…FRNDMASKYK (146 aa). H65 contributes to the nitrite binding site. H65 serves as a coordination point for O2. H93 contributes to the heme b binding site.

Belongs to the globin family. In terms of assembly, monomeric.

The protein resides in the cytoplasm. The protein localises to the sarcoplasm. It carries out the reaction Fe(III)-heme b-[protein] + nitric oxide + H2O = Fe(II)-heme b-[protein] + nitrite + 2 H(+). The enzyme catalyses H2O2 + AH2 = A + 2 H2O. Functionally, monomeric heme protein which primary function is to store oxygen and facilitate its diffusion within muscle tissues. Reversibly binds oxygen through a pentacoordinated heme iron and enables its timely and efficient release as needed during periods of heightened demand. Depending on the oxidative conditions of tissues and cells, and in addition to its ability to bind oxygen, it also has a nitrite reductase activity whereby it regulates the production of bioactive nitric oxide. Under stress conditions, like hypoxia and anoxia, it also protects cells against reactive oxygen species thanks to its pseudoperoxidase activity. This Aptenodytes forsteri (Emperor penguin) protein is Myoglobin (MB).